Reading from the N-terminus, the 91-residue chain is uncharacterized protein (91 aa).

The protein localises to the plastid. It is found in the chloroplast. This is an uncharacterized protein from Phalaenopsis aphrodite subsp. formosana (Moth orchid).